The chain runs to 343 residues: Holliday junction branch migration complex subunit RuvB (343 aa).

Positions 1–182 are large ATPase domain (RuvB-L); it reads MRDELLNTPT…FGISNRLDYY (182 aa). ATP-binding positions include isoleucine 21, arginine 22, glycine 63, lysine 66, threonine 67, threonine 68, 129-131, arginine 172, tyrosine 182, and arginine 219; that span reads EDF. Threonine 67 provides a ligand contact to Mg(2+). The segment at 183 to 253 is small ATPAse domain (RuvB-S); sequence SAELLQRIII…LARKTLAALE (71 aa). Residues 256 to 343 form a head domain (RuvB-H) region; the sequence is EDGLDDMDKK…DGPLFQKGSS (88 aa). Positions 311 and 316 each coordinate DNA.

It belongs to the RuvB family. Homohexamer. Forms an RuvA(8)-RuvB(12)-Holliday junction (HJ) complex. HJ DNA is sandwiched between 2 RuvA tetramers; dsDNA enters through RuvA and exits via RuvB. An RuvB hexamer assembles on each DNA strand where it exits the tetramer. Each RuvB hexamer is contacted by two RuvA subunits (via domain III) on 2 adjacent RuvB subunits; this complex drives branch migration. In the full resolvosome a probable DNA-RuvA(4)-RuvB(12)-RuvC(2) complex forms which resolves the HJ.

It is found in the cytoplasm. It catalyses the reaction ATP + H2O = ADP + phosphate + H(+). In terms of biological role, the RuvA-RuvB-RuvC complex processes Holliday junction (HJ) DNA during genetic recombination and DNA repair, while the RuvA-RuvB complex plays an important role in the rescue of blocked DNA replication forks via replication fork reversal (RFR). RuvA specifically binds to HJ cruciform DNA, conferring on it an open structure. The RuvB hexamer acts as an ATP-dependent pump, pulling dsDNA into and through the RuvAB complex. RuvB forms 2 homohexamers on either side of HJ DNA bound by 1 or 2 RuvA tetramers; 4 subunits per hexamer contact DNA at a time. Coordinated motions by a converter formed by DNA-disengaged RuvB subunits stimulates ATP hydrolysis and nucleotide exchange. Immobilization of the converter enables RuvB to convert the ATP-contained energy into a lever motion, pulling 2 nucleotides of DNA out of the RuvA tetramer per ATP hydrolyzed, thus driving DNA branch migration. The RuvB motors rotate together with the DNA substrate, which together with the progressing nucleotide cycle form the mechanistic basis for DNA recombination by continuous HJ branch migration. Branch migration allows RuvC to scan DNA until it finds its consensus sequence, where it cleaves and resolves cruciform DNA. This is Holliday junction branch migration complex subunit RuvB from Prosthecochloris aestuarii (strain DSM 271 / SK 413).